A 100-amino-acid polypeptide reads, in one-letter code: Urease subunit gamma (100 aa).

Belongs to the urease gamma subunit family. Heterotrimer of UreA (gamma), UreB (beta) and UreC (alpha) subunits. Three heterotrimers associate to form the active enzyme.

The protein resides in the cytoplasm. It carries out the reaction urea + 2 H2O + H(+) = hydrogencarbonate + 2 NH4(+). The protein operates within nitrogen metabolism; urea degradation; CO(2) and NH(3) from urea (urease route): step 1/1. This chain is Urease subunit gamma, found in Prochlorococcus marinus (strain MIT 9301).